The primary structure comprises 172 residues: S-ribosylhomocysteine lyase (172 aa).

Positions 54, 58, and 128 each coordinate Fe cation.

The protein belongs to the LuxS family. As to quaternary structure, homodimer. The cofactor is Fe cation.

It carries out the reaction S-(5-deoxy-D-ribos-5-yl)-L-homocysteine = (S)-4,5-dihydroxypentane-2,3-dione + L-homocysteine. Involved in the synthesis of autoinducer 2 (AI-2) which is secreted by bacteria and is used to communicate both the cell density and the metabolic potential of the environment. The regulation of gene expression in response to changes in cell density is called quorum sensing. Catalyzes the transformation of S-ribosylhomocysteine (RHC) to homocysteine (HC) and 4,5-dihydroxy-2,3-pentadione (DPD). This chain is S-ribosylhomocysteine lyase, found in Vibrio cholerae serotype O1 (strain ATCC 39541 / Classical Ogawa 395 / O395).